The following is a 409-amino-acid chain: Shaggy-related protein kinase NtK-1 (409 aa).

The disordered stretch occupies residues 1–27 (MTSVGLAPVSGLRESSSHSVGVDRLPE). The region spanning 73-357 (YMAERIVGQG…ALEAVTHAFF (285 aa)) is the Protein kinase domain. ATP is bound by residues 79 to 87 (VGQGSFGVV) and Lys102. The active-site Proton acceptor is Asp198.

The protein belongs to the protein kinase superfamily. CMGC Ser/Thr protein kinase family. GSK-3 subfamily. Autophosphorylated mainly on threonine and serine residues.

It carries out the reaction L-seryl-[protein] + ATP = O-phospho-L-seryl-[protein] + ADP + H(+). It catalyses the reaction L-threonyl-[protein] + ATP = O-phospho-L-threonyl-[protein] + ADP + H(+). Its function is as follows. May mediate extracellular signals to regulate transcription in differentiating cells. This Nicotiana tabacum (Common tobacco) protein is Shaggy-related protein kinase NtK-1 (NTK-1).